The chain runs to 282 residues: Undecaprenyl-diphosphatase (282 aa).

6 helical membrane passes run 90-110 (YWLG…GLVC), 121-141 (LWVV…AEYV), 165-185 (LALI…LFLG), 194-214 (FGFL…IPDA), 228-248 (QLLV…SWLL), and 256-276 (LYWF…LLAV).

Belongs to the UppP family.

The protein resides in the cell membrane. The catalysed reaction is di-trans,octa-cis-undecaprenyl diphosphate + H2O = di-trans,octa-cis-undecaprenyl phosphate + phosphate + H(+). Catalyzes the dephosphorylation of undecaprenyl diphosphate (UPP). Confers resistance to bacitracin. The chain is Undecaprenyl-diphosphatase from Mycobacterium leprae (strain Br4923).